We begin with the raw amino-acid sequence, 258 residues long: Methionine aminopeptidase (258 aa).

Residue His-84 participates in substrate binding. Residues Asp-102, Asp-113, and His-176 each coordinate a divalent metal cation. A substrate-binding site is contributed by His-183. Positions 211 and 242 each coordinate a divalent metal cation.

It belongs to the peptidase M24A family. Methionine aminopeptidase type 1 subfamily. In terms of assembly, monomer. Co(2+) is required as a cofactor. Requires Zn(2+) as cofactor. It depends on Mn(2+) as a cofactor. Fe(2+) serves as cofactor.

The enzyme catalyses Release of N-terminal amino acids, preferentially methionine, from peptides and arylamides.. In terms of biological role, removes the N-terminal methionine from nascent proteins. The N-terminal methionine is often cleaved when the second residue in the primary sequence is small and uncharged (Met-Ala-, Cys, Gly, Pro, Ser, Thr, or Val). Requires deformylation of the N(alpha)-formylated initiator methionine before it can be hydrolyzed. In Aquifex aeolicus (strain VF5), this protein is Methionine aminopeptidase.